The chain runs to 449 residues: Na(+)/H(+) antiporter NhaA 2 (449 aa).

Helical transmembrane passes span 32–52 (IEAT…TLSN), 87–107 (GLMT…VVLG), 114–134 (MVAL…GLYL), 145–165 (GWGV…ALLG), 174–194 (VFLL…VAVG), 202–222 (TALA…LLGV), 233–253 (AIIW…GVIL), 318–338 (WVAF…PITI), 347–367 (LAVM…FAWL), 382–402 (WGGL…ALFI), and 417–437 (LGIL…LCAL).

This sequence belongs to the NhaA Na(+)/H(+) (TC 2.A.33) antiporter family.

It localises to the cell inner membrane. The catalysed reaction is Na(+)(in) + 2 H(+)(out) = Na(+)(out) + 2 H(+)(in). In terms of biological role, na(+)/H(+) antiporter that extrudes sodium in exchange for external protons. This Acidiphilium cryptum (strain JF-5) protein is Na(+)/H(+) antiporter NhaA 2.